A 146-amino-acid chain; its full sequence is VHLTGEEKAAVTGLWSKVNVDEVGGEALGRLLVVYPWTQRFFDSFGDLSSPDAVMGNPKVKAHGKKVLNSFSEGLKNLDNLKGTFAKLSELHCDKLHVDPENFKLLGNVLVCVLAHHFGKEFTPQVQAAYQKVVAGVANALAHKYH.

At Val-1 the chain carries N-acetylvaline. One can recognise a Globin domain in the interval 2–146 (HLTGEEKAAV…VANALAHKYH (145 aa)). Thr-12 carries the post-translational modification Phosphothreonine. Ser-44 carries the phosphoserine modification. Lys-59 carries the N6-acetyllysine modification. Heme b is bound at residue His-63. Residue Lys-82 is modified to N6-acetyllysine. His-92 is a heme b binding site. Cys-93 carries the S-nitrosocysteine modification. Lys-144 bears the N6-acetyllysine mark.

The protein belongs to the globin family. As to quaternary structure, heterotetramer of two alpha chains and two beta chains. In terms of tissue distribution, red blood cells.

Functionally, involved in oxygen transport from the lung to the various peripheral tissues. The chain is Hemoglobin subunit beta (HBB) from Ailurus fulgens (Himalayan red panda).